Here is a 378-residue protein sequence, read N- to C-terminus: MKHSVHFGAGNIGRGFIGEILFKNDFHIDFVDVNNQIIHALNEKGKYEIEIAQKGQSRIEVTNVAGINSKEHPEQVIEAIQKTDIITTAIGPNILPFIAELLAKGIEARRVAGNTQALDVMACENMIGGSQFLYQEVKKYLSPEGLTFADNYIGFPNAAVDRIVPTQSHEDSLFVMVEPFNEWVVETKRLKNPDLRLEDVHYEEDLEPFIERKLFSVNSGHATSAYIGAHYGAKTILEALQNPNIKSRIESVLAEIRSLLIAKWNFDKKELENYHKVIIERFENPFIVDEVSRVARTPIRKLGYNERFIRPIRELKELSLSYKNLLKTVGYAFDYRDVNDEESIRLGELLAKQSVKDVVIQVTGLDDQELIEQIVEYI.

4 to 15 (SVHFGAGNIGRG) is a binding site for NAD(+).

It belongs to the mannitol dehydrogenase family.

The enzyme catalyses D-mannitol 1-phosphate + NAD(+) = beta-D-fructose 6-phosphate + NADH + H(+). The chain is Mannitol-1-phosphate 5-dehydrogenase from Streptococcus pneumoniae (strain JJA).